The sequence spans 318 residues: Ribose-phosphate pyrophosphokinase (318 aa).

ATP-binding positions include 43 to 45 (DGE) and 102 to 103 (RQ). Residues His-136 and Asp-176 each contribute to the Mg(2+) site. Lys-199 is a catalytic residue. D-ribose 5-phosphate is bound by residues Arg-201, Asp-225, and 229-233 (DTAGT).

Belongs to the ribose-phosphate pyrophosphokinase family. Class I subfamily. In terms of assembly, homohexamer. Mg(2+) is required as a cofactor.

The protein resides in the cytoplasm. The enzyme catalyses D-ribose 5-phosphate + ATP = 5-phospho-alpha-D-ribose 1-diphosphate + AMP + H(+). Its pathway is metabolic intermediate biosynthesis; 5-phospho-alpha-D-ribose 1-diphosphate biosynthesis; 5-phospho-alpha-D-ribose 1-diphosphate from D-ribose 5-phosphate (route I): step 1/1. Its function is as follows. Involved in the biosynthesis of the central metabolite phospho-alpha-D-ribosyl-1-pyrophosphate (PRPP) via the transfer of pyrophosphoryl group from ATP to 1-hydroxyl of ribose-5-phosphate (Rib-5-P). The protein is Ribose-phosphate pyrophosphokinase of Listeria ivanovii.